Reading from the N-terminus, the 255-residue chain is Indole-3-glycerol phosphate synthase (255 aa).

It belongs to the TrpC family.

It carries out the reaction 1-(2-carboxyphenylamino)-1-deoxy-D-ribulose 5-phosphate + H(+) = (1S,2R)-1-C-(indol-3-yl)glycerol 3-phosphate + CO2 + H2O. It participates in amino-acid biosynthesis; L-tryptophan biosynthesis; L-tryptophan from chorismate: step 4/5. This is Indole-3-glycerol phosphate synthase from Streptococcus sanguinis (strain SK36).